The sequence spans 528 residues: Gamma-taxilin (528 aa).

Over residues 1 to 10 (MATRVEEAAR) the composition is skewed to basic and acidic residues. A disordered region spans residues 1-36 (MATRVEEAARGRGGGAEEATEAGRGGRRRSPRQKFE). Arg-12 and Arg-24 each carry omega-N-methylarginine. Ser-79, Ser-86, Ser-97, and Ser-105 each carry phosphoserine. Residues 102–130 (TQESREEIPGGEARTDPPDGQQDSECNRN) form a disordered region. A compositionally biased stretch (basic and acidic residues) spans 104–118 (ESREEIPGGEARTDP). The stretch at 153 to 464 (EEKLAALCKK…LKEQVSIKAA (312 aa)) forms a coiled coil. A Phosphotyrosine modification is found at Tyr-283. The tract at residues 486–528 (HKELNTSSKRALGAHLEAEPKSQRSAVQKPPSTGSAPAIESVD) is disordered. The segment covering 508 to 520 (QRSAVQKPPSTGS) has biased composition (polar residues). Ser-517 bears the Phosphoserine mark.

It belongs to the taxilin family. In terms of assembly, binds to the C-terminal coiled coil region of syntaxin family members STX1A, STX3A and STX4A. Forms a heterodimer with ATF4 in osteoblasts. Ubiquitously expressed. Expressed at high level in heart and skeletal muscle. Expressed in brain, placenta, lung, liver, kidney and pancreas.

It is found in the nucleus membrane. It localises to the cytoplasm. The protein localises to the cytosol. May be involved in intracellular vesicle traffic. Inhibits ATF4-mediated transcription, possibly by dimerizing with ATF4 to form inactive dimers that cannot bind DNA. May be involved in regulating bone mass density through an ATF4-dependent pathway. May be involved in cell cycle progression. In Homo sapiens (Human), this protein is Gamma-taxilin (TXLNG).